Here is a 103-residue protein sequence, read N- to C-terminus: MNNSEFSKIAETTIAYIAEKIEEQDKEASIDVDLQGDILNLDTDKGVYVINKQSAAKEIWLSSPVSGPYHFFYEQGKWTNRAGLELMAILTEELNIKFDTRPT.

This sequence belongs to the frataxin family.

Involved in iron-sulfur (Fe-S) cluster assembly. May act as a regulator of Fe-S biogenesis. This chain is Iron-sulfur cluster assembly protein CyaY, found in Rickettsia rickettsii (strain Iowa).